The sequence spans 171 residues: Transcriptional repressor NrdR (171 aa).

Residues 1 to 21 are disordered; sequence MQCPHCQHTDSRVLESRSSEN. A zinc finger spans residues 3–34; it reads CPHCQHTDSRVLESRSSENGQSIRRRRECLQC. Basic and acidic residues predominate over residues 7–18; that stretch reads QHTDSRVLESRS. In terms of domain architecture, ATP-cone spans 49-139; sequence ITVIKKDGKR…VYGNFQGIRD (91 aa).

Belongs to the NrdR family. The cofactor is Zn(2+).

Negatively regulates transcription of bacterial ribonucleotide reductase nrd genes and operons by binding to NrdR-boxes. This chain is Transcriptional repressor NrdR, found in Microcystis aeruginosa (strain NIES-843 / IAM M-2473).